The sequence spans 147 residues: Ubiquitin-conjugating enzyme E2 D1 (147 aa).

Positions methionine 1–methionine 147 constitute a UBC core domain. Cysteine 85 serves as the catalytic Glycyl thioester intermediate.

This sequence belongs to the ubiquitin-conjugating enzyme family. Component of a E3 ubiquitin ligase complex containing UBE2D1, SIAH1, CACYBP/SIP, SKP1, APC and TBL1X. Interacts with RNF11. Autoubiquitinated.

The protein localises to the cytoplasm. The enzyme catalyses S-ubiquitinyl-[E1 ubiquitin-activating enzyme]-L-cysteine + [E2 ubiquitin-conjugating enzyme]-L-cysteine = [E1 ubiquitin-activating enzyme]-L-cysteine + S-ubiquitinyl-[E2 ubiquitin-conjugating enzyme]-L-cysteine.. It carries out the reaction S-ubiquitinyl-[E1 ubiquitin-activating enzyme]-L-cysteine + [acceptor protein]-L-lysine = [E1 ubiquitin-activating enzyme]-L-cysteine + N(6)-monoubiquitinyl-[acceptor protein]-L-lysine.. It functions in the pathway protein modification; protein ubiquitination. Functionally, accepts ubiquitin from the E1 complex and catalyzes its covalent attachment to other proteins. In vitro catalyzes 'Lys-48'-linked polyubiquitination. Mediates the selective degradation of short-lived and abnormal proteins. Functions in the E6/E6-AP-induced ubiquitination of p53/TP53. Mediates ubiquitination of PEX5 and auto-ubiquitination of STUB1, TRAF6 and TRIM63/MURF1. Ubiquitinates STUB1-associated HSP90AB1 in vitro. Lacks inherent specificity for any particular lysine residue of ubiquitin. Essential for viral activation of IRF3. Mediates polyubiquitination of CYP3A4. The chain is Ubiquitin-conjugating enzyme E2 D1 (UBE2D1) from Bos taurus (Bovine).